The primary structure comprises 129 residues: Small ribosomal subunit protein uS11 (129 aa).

The protein belongs to the universal ribosomal protein uS11 family. As to quaternary structure, part of the 30S ribosomal subunit. Interacts with proteins S7 and S18. Binds to IF-3.

Located on the platform of the 30S subunit, it bridges several disparate RNA helices of the 16S rRNA. Forms part of the Shine-Dalgarno cleft in the 70S ribosome. This Stenotrophomonas maltophilia (strain R551-3) protein is Small ribosomal subunit protein uS11.